Consider the following 430-residue polypeptide: Enolase (430 aa).

Residue Gln163 coordinates (2R)-2-phosphoglycerate. Residue Glu205 is the Proton donor of the active site. Mg(2+) contacts are provided by Asp242, Glu286, and Asp313. 4 residues coordinate (2R)-2-phosphoglycerate: Lys338, Arg367, Ser368, and Lys389. The Proton acceptor role is filled by Lys338.

Belongs to the enolase family. It depends on Mg(2+) as a cofactor.

The protein resides in the cytoplasm. Its subcellular location is the secreted. It is found in the cell surface. It catalyses the reaction (2R)-2-phosphoglycerate = phosphoenolpyruvate + H2O. The protein operates within carbohydrate degradation; glycolysis; pyruvate from D-glyceraldehyde 3-phosphate: step 4/5. Its function is as follows. Catalyzes the reversible conversion of 2-phosphoglycerate (2-PG) into phosphoenolpyruvate (PEP). It is essential for the degradation of carbohydrates via glycolysis. In Geotalea daltonii (strain DSM 22248 / JCM 15807 / FRC-32) (Geobacter daltonii), this protein is Enolase.